The primary structure comprises 188 residues: GTPase KRas (188 aa).

GTP contacts are provided by residues 10–18 (GAGGVGKSA), 29–35 (VDEYDPT), 59–60 (AG), and 116–119 (NKCD). The Effector region motif lies at 32–40 (YDPTIEDSY). Residues 167-188 (KEKMSKEGKKKKKKSKTKCVLM) are disordered. The residue at position 185 (cysteine 185) is a Cysteine methyl ester. Cysteine 185 carries the S-farnesyl cysteine lipid modification. The propeptide at 186-188 (VLM) is removed in mature form.

This sequence belongs to the small GTPase superfamily. Ras family.

It is found in the cell membrane. Its subcellular location is the cytoplasm. The enzyme catalyses GTP + H2O = GDP + phosphate + H(+). With respect to regulation, alternates between an inactive form bound to GDP and an active form bound to GTP. Activated by a guanine nucleotide-exchange factor (GEF) and inactivated by a GTPase-activating protein (GAP). In terms of biological role, ras proteins bind GDP/GTP and possess intrinsic GTPase activity. Plays an important role in the regulation of cell proliferation. May play a role in promoting oncogenic events by inducing transcriptional silencing of tumor suppressor genes (TSGs). The chain is GTPase KRas (kras) from Cyprinus carpio (Common carp).